The chain runs to 402 residues: uncharacterized protein (402 aa).

A run of 12 helical transmembrane segments spans residues 26–46 (IFMSFLKLGMVAFGGPTAIAY), 67–87 (VALAQIIPGASVMQVAAYVGF), 96–116 (FAAFMAYALPAFLIMLFLTII), 126–146 (TVSIFEALRIIVVSLAANGTL), 168–188 (LFILKFSPFIVIFVSIFIGFL), 213–233 (YVAYLLFGVFLFNLILYMIDS), 235–255 (LFLLSTLMMKVDVFAFGGGYG), 289–309 (PIVITATFVGYIVGGFIGSII), 312–332 (ISVFTPSFIILLSSIPIFDSL), 338–358 (FKNILHMILVSFVGLLVAVTI), 360–380 (FALLVDWSIQALIIFIVSFLL), and 381–401 (LYKKYNMLLVVLLSLVLGYLI).

The protein belongs to the chromate ion transporter (CHR) (TC 2.A.51) family.

The protein localises to the cell membrane. This is an uncharacterized protein from Methanocaldococcus jannaschii (strain ATCC 43067 / DSM 2661 / JAL-1 / JCM 10045 / NBRC 100440) (Methanococcus jannaschii).